The sequence spans 187 residues: Rusticyanin (187 aa).

A signal peptide spans Met-1–Ala-32. Positions Ser-85 to Lys-187 constitute a Plastocyanin-like domain. Positions 117, 170, 175, and 180 each coordinate Cu cation.

In terms of assembly, monomer. It depends on Cu cation as a cofactor.

The protein resides in the periplasm. Functionally, electron carrier from cytochrome c552 to the A-type oxidase. The chain is Rusticyanin (rus) from Acidithiobacillus ferrooxidans (strain ATCC 23270 / DSM 14882 / CIP 104768 / NCIMB 8455) (Ferrobacillus ferrooxidans (strain ATCC 23270)).